Reading from the N-terminus, the 217-residue chain is Deoxyribose-phosphate aldolase (217 aa).

Aspartate 90 acts as the Proton donor/acceptor in catalysis. Residue lysine 152 is the Schiff-base intermediate with acetaldehyde of the active site. Lysine 181 acts as the Proton donor/acceptor in catalysis.

It belongs to the DeoC/FbaB aldolase family. DeoC type 1 subfamily.

It is found in the cytoplasm. The catalysed reaction is 2-deoxy-D-ribose 5-phosphate = D-glyceraldehyde 3-phosphate + acetaldehyde. It participates in carbohydrate degradation; 2-deoxy-D-ribose 1-phosphate degradation; D-glyceraldehyde 3-phosphate and acetaldehyde from 2-deoxy-alpha-D-ribose 1-phosphate: step 2/2. Functionally, catalyzes a reversible aldol reaction between acetaldehyde and D-glyceraldehyde 3-phosphate to generate 2-deoxy-D-ribose 5-phosphate. The sequence is that of Deoxyribose-phosphate aldolase from Metamycoplasma hominis (Mycoplasma hominis).